The sequence spans 46 residues: MTKRTLGGTNLKKARTSGFRARMKTAAGRNVLKNRRRKGRHKLISV.

The protein belongs to the bacterial ribosomal protein bL34 family.

The protein localises to the plastid. It is found in the chloroplast. This chain is Large ribosomal subunit protein bL34c (rpl34), found in Guillardia theta (Cryptophyte).